The chain runs to 315 residues: Olfactory receptor 8J2 (315 aa).

Topologically, residues 1–24 are extracellular; it reads MASGNLTWVTEFILVGVSDDPELQ. An N-linked (GlcNAc...) asparagine glycan is attached at asparagine 5. The helical transmembrane segment at 25–45 threads the bilayer; sequence IPLFLVFLVLYLLTVAGNLGI. At 46–57 the chain is on the cytoplasmic side; the sequence is ITLTSVDPQLQT. The chain crosses the membrane as a helical span at residues 58 to 78; it reads PMYFFLRHLAIINLCNSTVVA. Residues 79–97 are Extracellular-facing; the sequence is PKMLVNFLVTKKTISYYGC. Cysteine 97 and cysteine 179 are oxidised to a cystine. A helical membrane pass occupies residues 98–118; it reads AAQLGGFLVFIVAEIFTLAAM. The Cytoplasmic portion of the chain corresponds to 119–143; sequence AYDRYVAIWSPLLYAVVVSPKVCRL. The chain crosses the membrane as a helical span at residues 144-164; the sequence is LVSLTYLQSLITALTVSSCVF. At 165–205 the chain is on the extracellular side; it reads SVSYCSSNIINHFYCDDVPLLALSCSDTYIPETAVFIFSGT. A helical transmembrane segment spans residues 206 to 226; the sequence is NLLFSMIVVLISYFNIVITIL. The Cytoplasmic segment spans residues 227–239; sequence RIRSSEGRQKAFS. A helical transmembrane segment spans residues 240–260; sequence TCASHMIAVVVFYGTLLFMYL. The Extracellular portion of the chain corresponds to 261 to 271; that stretch reads QPRSNHSLDTD. Residue asparagine 265 is glycosylated (N-linked (GlcNAc...) asparagine). The helical transmembrane segment at 272 to 292 threads the bilayer; sequence KMASVFYTLVIPVLNPLIYSL. Residues 293-315 lie on the Cytoplasmic side of the membrane; the sequence is RNKNVKDALKRFLDNPCRSLKLM.

It belongs to the G-protein coupled receptor 1 family.

The protein resides in the membrane. Its function is as follows. Odorant receptor. In Homo sapiens (Human), this protein is Olfactory receptor 8J2 (OR8J2).